Consider the following 566-residue polypeptide: FAD-dependent monooxygenase asqG (566 aa).

Residues 1 to 19 (MAAFTVIIIGGSISGLTLA) form the signal peptide. FAD contacts are provided by Glu-33, Val-47, Arg-113, Asp-313, and Ala-326. 2 helical membrane-spanning segments follow: residues 448 to 468 (ASST…GAVW) and 482 to 502 (GYTL…ASAV).

It belongs to the paxM FAD-dependent monooxygenase family. Requires FAD as cofactor.

The protein resides in the membrane. It catalyses the reaction [(1'E)-3'-hydroxy-3',7'-dimethylocta-1',6'-dien-1'-yl]-quinolinone B + NADPH + O2 + H(+) = [(1'E)-5'-(3',3'-dimethyloxiran-2'-yl)-3'-hydroxy-3'-methylpent-1'-en-1'-yl]-quinolinone B + NADP(+) + H2O. The protein operates within secondary metabolite biosynthesis. It functions in the pathway alkaloid biosynthesis. It participates in mycotoxin biosynthesis. Its function is as follows. FAD-dependent monooxygenase; part of the gene cluster that mediates the biosynthesis of the aspoquinolone mycotoxins. Within the pathway, the FAD-dependent monooxygenase asqG catalyzes the epoxidation of the terminal C7'-C8' olefin to produce the intermediate [(1'E)-5'-(3',3'-dimethyloxiran-2'-yl)-3'-hydroxy-3'-methylpent-1'-en-1'-yl]-quinolinone B. The first step of the pathway is catalyzed by the nonribosomal peptide synthetase asqK that condenses anthranilic acid and O-methyl-L-tyrosine to produce 4'-methoxycyclopeptin. 4'-methoxycyclopeptin is then converted to 4'-methoxydehydrocyclopeptin by the ketoglutarate-dependent dioxygenase asqJ. AsqJ also converts its first product 4'-methoxydehydrocyclopeptin to 4'-methoxycyclopenin. The following conversion of 4'-methoxycyclopenin into 4'-methoxyviridicatin is catalyzed by the cyclopenase asqI. 4'-methoxyviridicatin is the precursor of quinolone natural products, and is further converted to quinolinone B. The prenyltransferase asqH1 then catalyzes the canonical Friedel-Crafts alkylation of quinolinone B with dimethylallyl cation to yield dimethylallyl quinolone, which is subjected to FAD-dependent dehydrogenation by the FAD-linked oxidoreductase asqF to yield conjugated aryl diene. The delta(3') double bond then serves as the site of the second alkylation with DMAPP catalyzed by the prenyltransferase asqH2 to yield a carbenium ion intermediate, which can be attacked by H(2)O to yield a styrenyl quinolone containing a C3'-hydroxyprenyl chain. The FAD-dependent monooxygenase asqG performs epoxidation of the terminal C7'-C8' olefin. Finally, after dehydratation of the epoxide at C3 by asqC, the quinolone epoxide rearrangement protein asqO catalyzes an enzymatic 3-exo-tet cyclization to yield the cyclopropyl-THF ring system in aspoquinolone. This chain is FAD-dependent monooxygenase asqG, found in Emericella nidulans (strain FGSC A4 / ATCC 38163 / CBS 112.46 / NRRL 194 / M139) (Aspergillus nidulans).